A 98-amino-acid polypeptide reads, in one-letter code: NADH-ubiquinone oxidoreductase chain 4L (98 aa).

3 consecutive transmembrane segments (helical) span residues 1–21 (MLPI…GVLI), 29–49 (TLLC…LMIT), and 59–79 (IPLI…ALLV).

It belongs to the complex I subunit 4L family. In terms of assembly, core subunit of respiratory chain NADH dehydrogenase (Complex I) which is composed of 45 different subunits.

It localises to the mitochondrion inner membrane. The enzyme catalyses a ubiquinone + NADH + 5 H(+)(in) = a ubiquinol + NAD(+) + 4 H(+)(out). Functionally, core subunit of the mitochondrial membrane respiratory chain NADH dehydrogenase (Complex I) which catalyzes electron transfer from NADH through the respiratory chain, using ubiquinone as an electron acceptor. Part of the enzyme membrane arm which is embedded in the lipid bilayer and involved in proton translocation. This Phascogale tapoatafa (Common wambenger) protein is NADH-ubiquinone oxidoreductase chain 4L (MT-ND4L).